Reading from the N-terminus, the 316-residue chain is Ribosomal protein L11 methyltransferase (316 aa).

S-adenosyl-L-methionine-binding residues include Thr-162, Gly-183, Asp-205, and Asn-248.

The protein belongs to the methyltransferase superfamily. PrmA family.

It is found in the cytoplasm. It catalyses the reaction L-lysyl-[protein] + 3 S-adenosyl-L-methionine = N(6),N(6),N(6)-trimethyl-L-lysyl-[protein] + 3 S-adenosyl-L-homocysteine + 3 H(+). Its function is as follows. Methylates ribosomal protein L11. This chain is Ribosomal protein L11 methyltransferase, found in Levilactobacillus brevis (strain ATCC 367 / BCRC 12310 / CIP 105137 / JCM 1170 / LMG 11437 / NCIMB 947 / NCTC 947) (Lactobacillus brevis).